The primary structure comprises 242 residues: DNA repair protein RecO (242 aa).

Belongs to the RecO family.

Its function is as follows. Involved in DNA repair and RecF pathway recombination. The chain is DNA repair protein RecO from Wolbachia pipientis subsp. Culex pipiens (strain wPip).